The primary structure comprises 36 residues: Beta-amanitin proprotein (36 aa).

The propeptide occupies 1-10 (MSDINATRLP). A cross-link (cyclopeptide (Ile-Pro)) is located at residues 11 to 18 (IWGIGCDP). Residues 12-16 (WGIGC) constitute a cross-link (2'-cysteinyl-6'-hydroxytryptophan sulfoxide (Trp-Cys)). Positions 19–36 (CIGDDVTALLTRGEASLC) are excised as a propeptide.

This sequence belongs to the MSDIN fungal toxin family. Post-translationally, processed by the macrocyclase-peptidase enzyme POPB to yield a toxic cyclic decapeptide. POPB first removes 10 residues from the N-terminus. Conformational trapping of the remaining peptide forces the enzyme to release this intermediate rather than proceed to macrocyclization. The enzyme rebinds the remaining peptide in a different conformation and catalyzes macrocyclization of the N-terminal 8 residues.

Functionally, toxin belonging to the bicyclic octapeptides amatoxins that acts by binding non-competitively to RNA polymerase II and greatly slowing the elongation of transcripts from target promoters. This chain is Beta-amanitin proprotein, found in Amanita phalloides (Death cap).